Here is a 614-residue protein sequence, read N- to C-terminus: Pyrophosphate--fructose 6-phosphate 1-phosphotransferase subunit alpha 1 (614 aa).

It belongs to the phosphofructokinase type A (PFKA) family. PPi-dependent PFK group II subfamily. Clade 'Long' sub-subfamily. Tetramer of two alpha (regulatory) and two beta (catalytic) chains. As to expression, expressed in leaves, roots, and flowers (e.g. sepals, petals, stamen and gynoecium).

It localises to the cytoplasm. The protein operates within carbohydrate degradation; glycolysis; D-glyceraldehyde 3-phosphate and glycerone phosphate from D-glucose: step 3/4. With respect to regulation, allosterically activated by fructose 2,6-bisphosphate. Regulatory subunit of pyrophosphate--fructose 6-phosphate 1-phosphotransferase. This is Pyrophosphate--fructose 6-phosphate 1-phosphotransferase subunit alpha 1 from Arabidopsis thaliana (Mouse-ear cress).